We begin with the raw amino-acid sequence, 492 residues long: Ferruginol synthase (492 aa).

The helical transmembrane segment at 1-21 (MDPFPLVAAALFIAATWFITF) threads the bilayer. Cys436 is a binding site for heme.

Belongs to the cytochrome P450 family. Requires heme as cofactor. In terms of tissue distribution, expressed in leaf glandular trichomes.

Its subcellular location is the membrane. It catalyses the reaction abieta-8,11,13-triene + reduced [NADPH--hemoprotein reductase] + O2 = ferruginol + oxidized [NADPH--hemoprotein reductase] + H2O + H(+). It carries out the reaction ferruginol + reduced [NADPH--hemoprotein reductase] + O2 = 11-hydroxyferruginol + oxidized [NADPH--hemoprotein reductase] + H2O + H(+). The enzyme catalyses miltiradiene + 2 reduced [NADPH--hemoprotein reductase] + 2 O2 = 11-oxomiltiradiene + 2 oxidized [NADPH--hemoprotein reductase] + 3 H2O + 2 H(+). The protein operates within secondary metabolite biosynthesis; terpenoid biosynthesis. Its function is as follows. Monooxygenase involved in the biosynthesis of labdane-related diterpenes natural products. Catalyzes the oxidation of abietatriene to produce ferruginol. Catalyzes the oxidation of ferruginol at C-12 to produce 11-hydroxyferruginol. Ferruginol and 11-hydroxyferruginol are intermediates in the biosynthesis of carnosate, a potent antioxidant. May also convert miltiradiene into 11-oxomiltiradiene. This is Ferruginol synthase from Salvia fruticosa (Greek sage).